The following is a 121-amino-acid chain: Large ribosomal subunit protein bL31 (121 aa).

Positions 1–97 (MKEGIHPDYK…AKENRAAKRA (97 aa)) are large ribosomal subunit protein bL31. Zn(2+)-binding residues include cysteine 16, cysteine 18, cysteine 36, and cysteine 39. A compositionally biased stretch (low complexity) spans 65 to 80 (ATPAKAEPAKKAPAAE). Residues 65–121 (ATPAKAEPAKKAPAAEPAKKVEAAKENRAAKRAKAGKSKKSEAAPAAEAPAADAKPE) are disordered. Positions 74–121 (KKAPAAEPAKKVEAAKENRAAKRAKAGKSKKSEAAPAAEAPAADAKPE) are unknown. The span at 81–93 (PAKKVEAAKENRA) shows a compositional bias: basic and acidic residues. A compositionally biased stretch (low complexity) spans 107-121 (AAPAAEAPAADAKPE).

This sequence belongs to the bacterial ribosomal protein bL31 family. Type A subfamily. As to quaternary structure, part of the 50S ribosomal subunit. Requires Zn(2+) as cofactor.

Functionally, binds the 23S rRNA. The polypeptide is Large ribosomal subunit protein bL31 (Anaeromyxobacter dehalogenans (strain 2CP-C)).